The chain runs to 259 residues: Leucine-rich repeat-containing protein 61 (259 aa).

LRR repeat units lie at residues 32–53, 54–75, 76–97, and 98–119; these read SILLLKLRGLGLADLGCLGECL, GLEWLDLSGNALTHLGPLASLR, QLAVLNVSNNRLTGLEPLATCE, and NLQSLNAAGNLLATPGQLQCLA. An LRRCT domain is found at 138–178; the sequence is NPLCANPSYWAAVRELLPGLKVIDGERVIGRGSEFYQLCRD.

The chain is Leucine-rich repeat-containing protein 61 (LRRC61) from Homo sapiens (Human).